Here is a 75-residue protein sequence, read N- to C-terminus: DNA-directed RNA polymerase subunit omega (75 aa).

The protein belongs to the RNA polymerase subunit omega family. As to quaternary structure, in cyanobacteria the RNAP catalytic core is composed of 2 alpha, 1 beta, 1 beta', 1 gamma and 1 omega subunit. When a sigma factor is associated with the core the holoenzyme is formed, which can initiate transcription.

The enzyme catalyses RNA(n) + a ribonucleoside 5'-triphosphate = RNA(n+1) + diphosphate. In terms of biological role, promotes RNA polymerase assembly. Latches the N- and C-terminal regions of the beta' subunit thereby facilitating its interaction with the beta and alpha subunits. The polypeptide is DNA-directed RNA polymerase subunit omega (Prochlorococcus marinus (strain MIT 9211)).